Reading from the N-terminus, the 367-residue chain is NAD(P)H-quinone oxidoreductase subunit 1, chloroplastic (367 aa).

The next 8 helical transmembrane spans lie at 29-49, 96-116, 128-148, 176-196, 204-224, 266-286, 304-324, and 347-367; these read WIPL…LVVV, VLLF…SYLI, INLG…GLLM, LALC…IDIV, ILGW…IAAL, LVSA…PIPI, VISA…FLFL, and FLLP…IALL.

It belongs to the complex I subunit 1 family. NDH is composed of at least 16 different subunits, 5 of which are encoded in the nucleus.

It localises to the plastid. The protein resides in the chloroplast thylakoid membrane. The catalysed reaction is a plastoquinone + NADH + (n+1) H(+)(in) = a plastoquinol + NAD(+) + n H(+)(out). The enzyme catalyses a plastoquinone + NADPH + (n+1) H(+)(in) = a plastoquinol + NADP(+) + n H(+)(out). NDH shuttles electrons from NAD(P)H:plastoquinone, via FMN and iron-sulfur (Fe-S) centers, to quinones in the photosynthetic chain and possibly in a chloroplast respiratory chain. The immediate electron acceptor for the enzyme in this species is believed to be plastoquinone. Couples the redox reaction to proton translocation, and thus conserves the redox energy in a proton gradient. This chain is NAD(P)H-quinone oxidoreductase subunit 1, chloroplastic, found in Mesostigma viride (Green alga).